We begin with the raw amino-acid sequence, 143 residues long: Ribonuclease P protein component 2 (143 aa).

It belongs to the eukaryotic/archaeal RNase P protein component 2 family. In terms of assembly, consists of a catalytic RNA component and at least 4-5 protein subunits.

Its subcellular location is the cytoplasm. The enzyme catalyses Endonucleolytic cleavage of RNA, removing 5'-extranucleotides from tRNA precursor.. Functionally, part of ribonuclease P, a protein complex that generates mature tRNA molecules by cleaving their 5'-ends. The polypeptide is Ribonuclease P protein component 2 (Saccharolobus solfataricus (strain ATCC 35092 / DSM 1617 / JCM 11322 / P2) (Sulfolobus solfataricus)).